Reading from the N-terminus, the 238-residue chain is Deoxyribose-phosphate aldolase (238 aa).

Asp-102 acts as the Proton donor/acceptor in catalysis. The Schiff-base intermediate with acetaldehyde role is filled by Lys-164. Lys-193 serves as the catalytic Proton donor/acceptor.

The protein belongs to the DeoC/FbaB aldolase family. DeoC type 1 subfamily.

Its subcellular location is the cytoplasm. The enzyme catalyses 2-deoxy-D-ribose 5-phosphate = D-glyceraldehyde 3-phosphate + acetaldehyde. It participates in carbohydrate degradation; 2-deoxy-D-ribose 1-phosphate degradation; D-glyceraldehyde 3-phosphate and acetaldehyde from 2-deoxy-alpha-D-ribose 1-phosphate: step 2/2. Catalyzes a reversible aldol reaction between acetaldehyde and D-glyceraldehyde 3-phosphate to generate 2-deoxy-D-ribose 5-phosphate. In Rhodospirillum rubrum (strain ATCC 11170 / ATH 1.1.1 / DSM 467 / LMG 4362 / NCIMB 8255 / S1), this protein is Deoxyribose-phosphate aldolase.